The primary structure comprises 259 residues: MSEVNLSGMTALSIGRGVTLNNASELEAALRHIGATRYHNHHPFHKLLHSGKLNKGQVQAWALNRYYYQSTIPLKDAMVMTRFRDRATRLEWRHRIEDHDGDVGTEGGIERWIKLTEGLGLDTAYVESTEGILPATRFAVEAYVHFCRDRSPLEAIASSLTELFAPSIHEERISGMLEHYSFVNNDTMSYFKRRLTQAPRDANFALHYVREHATTPEQRAAVCNALIFKTNVLWVQLDALYHAYVEGHIPPGAFVPKEG.

Belongs to the PqqC family.

The catalysed reaction is 6-(2-amino-2-carboxyethyl)-7,8-dioxo-1,2,3,4,7,8-hexahydroquinoline-2,4-dicarboxylate + 3 O2 = pyrroloquinoline quinone + 2 H2O2 + 2 H2O + H(+). Its pathway is cofactor biosynthesis; pyrroloquinoline quinone biosynthesis. Ring cyclization and eight-electron oxidation of 3a-(2-amino-2-carboxyethyl)-4,5-dioxo-4,5,6,7,8,9-hexahydroquinoline-7,9-dicarboxylic-acid to PQQ. This Bradyrhizobium sp. (strain ORS 278) protein is Pyrroloquinoline-quinone synthase.